The following is a 203-amino-acid chain: Small ribosomal subunit protein uS4 (203 aa).

The S4 RNA-binding domain occupies 93-173 (RRFDNVVFRS…IPSWIQVDKA (81 aa)).

It belongs to the universal ribosomal protein uS4 family. Part of the 30S ribosomal subunit. Contacts protein S5. The interaction surface between S4 and S5 is involved in control of translational fidelity.

Functionally, one of the primary rRNA binding proteins, it binds directly to 16S rRNA where it nucleates assembly of the body of the 30S subunit. With S5 and S12 plays an important role in translational accuracy. The sequence is that of Small ribosomal subunit protein uS4 from Chlorobium phaeobacteroides (strain DSM 266 / SMG 266 / 2430).